A 290-amino-acid chain; its full sequence is Light-independent protochlorophyllide reductase iron-sulfur ATP-binding protein (290 aa).

ATP contacts are provided by residues 10–15 and K39; that span reads GIGKST. S14 is a Mg(2+) binding site. The [4Fe-4S] cluster site is built by C95 and C129. Position 180 to 181 (180 to 181) interacts with ATP; it reads NR.

It belongs to the NifH/BchL/ChlL family. In terms of assembly, homodimer. Protochlorophyllide reductase is composed of three subunits; ChlL, ChlN and ChlB. The cofactor is [4Fe-4S] cluster.

It localises to the plastid. It is found in the chloroplast. It catalyses the reaction chlorophyllide a + oxidized 2[4Fe-4S]-[ferredoxin] + 2 ADP + 2 phosphate = protochlorophyllide a + reduced 2[4Fe-4S]-[ferredoxin] + 2 ATP + 2 H2O. It functions in the pathway porphyrin-containing compound metabolism; chlorophyll biosynthesis (light-independent). Its function is as follows. Component of the dark-operative protochlorophyllide reductase (DPOR) that uses Mg-ATP and reduced ferredoxin to reduce ring D of protochlorophyllide (Pchlide) to form chlorophyllide a (Chlide). This reaction is light-independent. The L component serves as a unique electron donor to the NB-component of the complex, and binds Mg-ATP. This chain is Light-independent protochlorophyllide reductase iron-sulfur ATP-binding protein, found in Anthoceros angustus (Hornwort).